Here is a 149-residue protein sequence, read N- to C-terminus: Small ribosomal subunit protein uS19w (149 aa).

Belongs to the universal ribosomal protein uS19 family.

The protein resides in the cytoplasm. This chain is Small ribosomal subunit protein uS19w (RPS15E), found in Arabidopsis thaliana (Mouse-ear cress).